A 220-amino-acid chain; its full sequence is Small ribosomal subunit protein uS3 (220 aa).

Residues 38 to 106 (IRKYVKGRLK…RVHININEIK (69 aa)) enclose the KH type-2 domain.

This sequence belongs to the universal ribosomal protein uS3 family. Part of the 30S ribosomal subunit. Forms a tight complex with proteins S10 and S14.

Its function is as follows. Binds the lower part of the 30S subunit head. Binds mRNA in the 70S ribosome, positioning it for translation. The chain is Small ribosomal subunit protein uS3 from Brevibacillus brevis (strain 47 / JCM 6285 / NBRC 100599).